A 392-amino-acid chain; its full sequence is p21-activated protein kinase-interacting protein 1 (392 aa).

6 WD repeats span residues Val33–Lys72, Ile73–Trp113, Glu114–Gly155, Arg156–Ala195, Ser196–Leu235, and Val236–Lys275. The segment at Ser312–Gln392 is disordered. Residue Ser320 is modified to Phosphoserine. The span at Glu325–Ser345 shows a compositional bias: basic and acidic residues. Positions Lys381–Gln392 are enriched in basic residues.

As to quaternary structure, interacts with PAK1. As to expression, expressed in brain, colon, heart, kidney, liver, lung, muscle, peripheral blood leukocytes, placenta, small intestine, spleen and thymus.

It is found in the nucleus. The protein localises to the nucleolus. Negatively regulates the PAK1 kinase. PAK1 is a member of the PAK kinase family, which has been shown to play a positive role in the regulation of signaling pathways involving MAPK8 and RELA. PAK1 exists as an inactive homodimer, which is activated by binding of small GTPases such as CDC42 to an N-terminal regulatory domain. PAK1IP1 also binds to the N-terminus of PAK1, and inhibits the specific activation of PAK1 by CDC42. May be involved in ribosomal large subunit assembly. The sequence is that of p21-activated protein kinase-interacting protein 1 (PAK1IP1) from Homo sapiens (Human).